Consider the following 213-residue polypeptide: tRNA (guanine-N(7)-)-methyltransferase (213 aa).

Residues Asp44, Glu69, Asn96, and Asp119 each contribute to the S-adenosyl-L-methionine site. Asp119 is a catalytic residue. The substrate site is built by Lys123 and Asp155.

The protein belongs to the class I-like SAM-binding methyltransferase superfamily. TrmB family.

It carries out the reaction guanosine(46) in tRNA + S-adenosyl-L-methionine = N(7)-methylguanosine(46) in tRNA + S-adenosyl-L-homocysteine. The protein operates within tRNA modification; N(7)-methylguanine-tRNA biosynthesis. In terms of biological role, catalyzes the formation of N(7)-methylguanine at position 46 (m7G46) in tRNA. The polypeptide is tRNA (guanine-N(7)-)-methyltransferase (Thermosynechococcus vestitus (strain NIES-2133 / IAM M-273 / BP-1)).